Reading from the N-terminus, the 159-residue chain is Transcription antitermination protein NusB (159 aa).

The segment at 1–20 (MNKNTQGKPSGKPVRRDGVD) is disordered.

Belongs to the NusB family.

In terms of biological role, involved in transcription antitermination. Required for transcription of ribosomal RNA (rRNA) genes. Binds specifically to the boxA antiterminator sequence of the ribosomal RNA (rrn) operons. The chain is Transcription antitermination protein NusB from Stenotrophomonas maltophilia (strain R551-3).